Reading from the N-terminus, the 443-residue chain is Xaa-Pro dipeptidase (443 aa).

Mn(2+)-binding residues include D244, D255, H336, E381, and E420.

The protein belongs to the peptidase M24B family. Bacterial-type prolidase subfamily. Mn(2+) serves as cofactor.

The enzyme catalyses Xaa-L-Pro dipeptide + H2O = an L-alpha-amino acid + L-proline. In terms of biological role, splits dipeptides with a prolyl residue in the C-terminal position. The chain is Xaa-Pro dipeptidase from Stenotrophomonas maltophilia (strain K279a).